A 338-amino-acid polypeptide reads, in one-letter code: Nicotinate-nucleotide--dimethylbenzimidazole phosphoribosyltransferase (338 aa).

E305 serves as the catalytic Proton acceptor.

This sequence belongs to the CobT family.

It carries out the reaction 5,6-dimethylbenzimidazole + nicotinate beta-D-ribonucleotide = alpha-ribazole 5'-phosphate + nicotinate + H(+). Its pathway is nucleoside biosynthesis; alpha-ribazole biosynthesis; alpha-ribazole from 5,6-dimethylbenzimidazole: step 1/2. Functionally, catalyzes the synthesis of alpha-ribazole-5'-phosphate from nicotinate mononucleotide (NAMN) and 5,6-dimethylbenzimidazole (DMB). The protein is Nicotinate-nucleotide--dimethylbenzimidazole phosphoribosyltransferase of Rhizobium leguminosarum bv. trifolii (strain WSM2304).